We begin with the raw amino-acid sequence, 528 residues long: UDP-glucuronosyltransferase 2A1 (528 aa).

Positions 1 to 21 are cleaved as a signal peptide; that stretch reads MLKNILLCSLQISLLGMSLGG. At 22–494 the chain is on the extracellular side; it reads NVLIWPMEGS…FQYHSLDVIG (473 aa). Asn49 carries an N-linked (GlcNAc...) asparagine glycan. At Lys135 the chain carries N6-succinyllysine. N-linked (GlcNAc...) asparagine glycosylation is present at Asn314. Residues 495-515 form a helical membrane-spanning segment; it reads FLLACVASAILLVAKCCLFIF. Over 516–528 the chain is Cytoplasmic; sequence QKVGKTGKKKKRD.

This sequence belongs to the UDP-glycosyltransferase family.

It is found in the membrane. The catalysed reaction is glucuronate acceptor + UDP-alpha-D-glucuronate = acceptor beta-D-glucuronoside + UDP + H(+). It catalyses the reaction 16beta,17beta-estriol + UDP-alpha-D-glucuronate = 16beta,17beta-estriol 16-O-(beta-D-glucuronate) + UDP + H(+). The enzyme catalyses 16alpha,17alpha-estriol + UDP-alpha-D-glucuronate = 16alpha,17alpha-estriol 16-O-(beta-D-glucuronate) + UDP + H(+). It carries out the reaction 17alpha-estradiol + UDP-alpha-D-glucuronate = 17alpha-estradiol 17-O-(beta-D-glucuronate) + UDP + H(+). The catalysed reaction is 17alpha-estradiol + UDP-alpha-D-glucuronate = 17alpha-estradiol 3-O-(beta-D-glucuronate) + UDP + H(+). It catalyses the reaction 17beta-estradiol + UDP-alpha-D-glucuronate = 17beta-estradiol 3-O-(beta-D-glucuronate) + UDP + H(+). The enzyme catalyses 17beta-estradiol + UDP-alpha-D-glucuronate = 17beta-estradiol 17-O-(beta-D-glucuronate) + UDP + H(+). It carries out the reaction testosterone + UDP-alpha-D-glucuronate = testosterone 17-O-(beta-D-glucuronate) + UDP + H(+). The catalysed reaction is epitestosterone + UDP-alpha-D-glucuronate = epitestosterone 17-O-(beta-D-glucuronate) + UDP + H(+). It catalyses the reaction lithocholate + UDP-alpha-D-glucuronate = lithocholoyl-3-O-(beta-D-glucuronate) + UDP + H(+). The enzyme catalyses lithocholate + UDP-alpha-D-glucuronate = lithocholoyl-24-O-(beta-D-glucuronate) + UDP. It carries out the reaction deoxycholate + UDP-alpha-D-glucuronate = deoxycholoyl-24-O-(beta-D-glucuronate) + UDP. The catalysed reaction is hyodeoxycholate + UDP-alpha-D-glucuronate = hyodeoxycholate 6-O-(beta-D-glucuronate) + UDP + H(+). It catalyses the reaction hyocholate + UDP-alpha-D-glucuronate = hyocholoyl-24-O-(beta-D-glucuronate) + UDP. Its function is as follows. UDP-glucuronosyltransferase (UGT) that catalyzes phase II biotransformation reactions in which lipophilic substrates are conjugated with glucuronic acid to increase the metabolite's water solubility, thereby facilitating excretion into either the urine or bile. Essential for the elimination and detoxification of drugs, xenobiotics and endogenous compounds. Catalyzes the glucuronidation of endogenous steroid hormones such as androgens (testosterones) and estrogens (estradiol and estriol). Contributes to bile acid (BA) detoxification by catalyzing the glucuronidation of BA substrates, which are natural detergents for dietary lipids absorption. Shows a high affinity to aliphatic odorants such as citronellol as well as olfactory tissue specificity, and therefore may be involved in olfaction. The chain is UDP-glucuronosyltransferase 2A1 from Mus musculus (Mouse).